Here is a 449-residue protein sequence, read N- to C-terminus: UDP-N-acetylmuramoylalanine--D-glutamate ligase (449 aa).

118 to 124 (GSNGKTT) serves as a coordination point for ATP.

This sequence belongs to the MurCDEF family.

The protein resides in the cytoplasm. It catalyses the reaction UDP-N-acetyl-alpha-D-muramoyl-L-alanine + D-glutamate + ATP = UDP-N-acetyl-alpha-D-muramoyl-L-alanyl-D-glutamate + ADP + phosphate + H(+). It functions in the pathway cell wall biogenesis; peptidoglycan biosynthesis. Its function is as follows. Cell wall formation. Catalyzes the addition of glutamate to the nucleotide precursor UDP-N-acetylmuramoyl-L-alanine (UMA). In Leuconostoc citreum (strain KM20), this protein is UDP-N-acetylmuramoylalanine--D-glutamate ligase.